An 802-amino-acid chain; its full sequence is Copper-exporting P-type ATPase (802 aa).

HMA domains are found at residues 5-70 (KKTT…YGVA) and 72-138 (ETVE…YDAS). Residues Cys16, Cys19, Cys83, and Cys86 each coordinate Cu(+). The next 6 membrane-spanning stretches (helical) occupy residues 161-181 (LIIS…HLFN), 192-212 (WFQF…FYVG), 224-244 (MDVL…YEMV), 256-276 (LYFE…YLEA), 411-431 (YFVP…ITLV), and 438-458 (PALV…LGLA). Asp495 (4-aspartylphosphate intermediate) is an active-site residue. Asp690 and Asp694 together coordinate Mg(2+). Helical transmembrane passes span 748 to 767 (LFWA…LGLL) and 771 to 790 (VAGA…ALRL).

The protein belongs to the cation transport ATPase (P-type) (TC 3.A.3) family. Type IB subfamily.

It localises to the cell membrane. The enzyme catalyses Cu(+)(in) + ATP + H2O = Cu(+)(out) + ADP + phosphate + H(+). Involved in copper export. The polypeptide is Copper-exporting P-type ATPase (copA) (Staphylococcus aureus (strain USA300 / TCH1516)).